The sequence spans 455 residues: Phosphoglucosamine mutase (455 aa).

Residue S104 is the Phosphoserine intermediate of the active site. Residues S104, D243, D245, and D247 each coordinate Mg(2+). A Phosphoserine modification is found at S104.

It belongs to the phosphohexose mutase family. The cofactor is Mg(2+). In terms of processing, activated by phosphorylation.

The enzyme catalyses alpha-D-glucosamine 1-phosphate = D-glucosamine 6-phosphate. Functionally, catalyzes the conversion of glucosamine-6-phosphate to glucosamine-1-phosphate. This chain is Phosphoglucosamine mutase, found in Synechococcus sp. (strain CC9311).